Here is a 298-residue protein sequence, read N- to C-terminus: Zinc finger protein-like 1 homolog (298 aa).

Residues 1-43 (MGLCKCPKRLVTNQFCFEHRVNVCEHCMVQSHPKCIVQSYLQW) form a B box-type; degenerate zinc finger. Residues 53–101 (CTLCGTTLEQGDCVRLVCYHVFHWDCLNARQAALPANTAPRGHQCPACT) form an RING-type; atypical zinc finger. The tract at residues 199 to 230 (AGDYASSRRPLLPRQSPIGGTDRDDNKYQRRT) is disordered. S214 is modified (phosphoserine). Residues 255 to 275 (WFLVTAGILAFVLFVYLMAWL) form a helical membrane-spanning segment.

This sequence belongs to the ZFPL1 family.

It localises to the membrane. The sequence is that of Zinc finger protein-like 1 homolog from Drosophila erecta (Fruit fly).